The primary structure comprises 155 residues: 6,7-dimethyl-8-ribityllumazine synthase (155 aa).

5-amino-6-(D-ribitylamino)uracil contacts are provided by residues Phe23, 57 to 59 (AFE), and 80 to 82 (AVI). Residue 85 to 86 (AT) coordinates (2S)-2-hydroxy-3-oxobutyl phosphate. The Proton donor role is filled by His88. Tyr113 provides a ligand contact to 5-amino-6-(D-ribitylamino)uracil. A (2S)-2-hydroxy-3-oxobutyl phosphate-binding site is contributed by Arg127.

The protein belongs to the DMRL synthase family.

It catalyses the reaction (2S)-2-hydroxy-3-oxobutyl phosphate + 5-amino-6-(D-ribitylamino)uracil = 6,7-dimethyl-8-(1-D-ribityl)lumazine + phosphate + 2 H2O + H(+). The protein operates within cofactor biosynthesis; riboflavin biosynthesis; riboflavin from 2-hydroxy-3-oxobutyl phosphate and 5-amino-6-(D-ribitylamino)uracil: step 1/2. Functionally, catalyzes the formation of 6,7-dimethyl-8-ribityllumazine by condensation of 5-amino-6-(D-ribitylamino)uracil with 3,4-dihydroxy-2-butanone 4-phosphate. This is the penultimate step in the biosynthesis of riboflavin. This is 6,7-dimethyl-8-ribityllumazine synthase from Moorella thermoacetica (strain ATCC 39073 / JCM 9320).